The following is a 277-amino-acid chain: 2-dehydro-3-deoxyphosphooctonate aldolase (277 aa).

It belongs to the KdsA family.

It is found in the cytoplasm. It catalyses the reaction D-arabinose 5-phosphate + phosphoenolpyruvate + H2O = 3-deoxy-alpha-D-manno-2-octulosonate-8-phosphate + phosphate. The protein operates within carbohydrate biosynthesis; 3-deoxy-D-manno-octulosonate biosynthesis; 3-deoxy-D-manno-octulosonate from D-ribulose 5-phosphate: step 2/3. It participates in bacterial outer membrane biogenesis; lipopolysaccharide biosynthesis. This Syntrophotalea carbinolica (strain DSM 2380 / NBRC 103641 / GraBd1) (Pelobacter carbinolicus) protein is 2-dehydro-3-deoxyphosphooctonate aldolase.